Here is a 160-residue protein sequence, read N- to C-terminus: MTKRVIYPGTFDPVTHGHSDIISRAANMFDHVVVGVAFSPSKKTMFSLEERMDMLVQATAHLNNVSVVGFSGLLVDLAKDQQANILVRGLRTTMDFEYELGLTTMYKKLMPELETIFLTPPEEHGFLSSTIVRETAIHGGKIDQFVHPYVASAIYQKVKQ.

Substrate is bound at residue threonine 10. Residues 10–11 and histidine 18 contribute to the ATP site; that span reads TF. Substrate-binding residues include lysine 42, leucine 74, and arginine 88. ATP-binding positions include 89–91, glutamate 99, and 124–130; these read GLR and HGFLSST.

It belongs to the bacterial CoaD family. In terms of assembly, homohexamer. The cofactor is Mg(2+).

The protein resides in the cytoplasm. The enzyme catalyses (R)-4'-phosphopantetheine + ATP + H(+) = 3'-dephospho-CoA + diphosphate. It participates in cofactor biosynthesis; coenzyme A biosynthesis; CoA from (R)-pantothenate: step 4/5. Reversibly transfers an adenylyl group from ATP to 4'-phosphopantetheine, yielding dephospho-CoA (dPCoA) and pyrophosphate. This Aliivibrio fischeri (strain MJ11) (Vibrio fischeri) protein is Phosphopantetheine adenylyltransferase.